The following is a 174-amino-acid chain: MPKLWDAVAGFAVTFGTLFKKPITEEYPEKPGPVAPRYHGRHQLNRYPDGLEKCIGCELCAWACPADAIYVEGDDNTADERYSPGERYGRVYQINYLRCIGCGLCIEACPTRALTMTNDYEMADDNRADLIWGKDKLLAPLQDGMLAPPHPMAPGATDDDYYLGRIGPVTEDVR.

4Fe-4S ferredoxin-type domains are found at residues 44 to 74 (LNRY…VEGD) and 90 to 119 (RVYQ…MTND). Residues cysteine 54, cysteine 57, cysteine 60, cysteine 64, cysteine 99, cysteine 102, cysteine 105, and cysteine 109 each contribute to the [4Fe-4S] cluster site.

It belongs to the complex I 23 kDa subunit family. As to quaternary structure, NDH-1 is composed of 14 different subunits. Subunits NuoA, H, J, K, L, M, N constitute the membrane sector of the complex. The cofactor is [4Fe-4S] cluster.

The protein resides in the cell membrane. It catalyses the reaction a quinone + NADH + 5 H(+)(in) = a quinol + NAD(+) + 4 H(+)(out). Its function is as follows. NDH-1 shuttles electrons from NADH, via FMN and iron-sulfur (Fe-S) centers, to quinones in the respiratory chain. The immediate electron acceptor for the enzyme in this species is believed to be menaquinone. Couples the redox reaction to proton translocation (for every two electrons transferred, four hydrogen ions are translocated across the cytoplasmic membrane), and thus conserves the redox energy in a proton gradient. This is NADH-quinone oxidoreductase subunit I from Mycobacterium sp. (strain JLS).